We begin with the raw amino-acid sequence, 753 residues long: 5-methyltetrahydropteroyltriglutamate--homocysteine methyltransferase (753 aa).

5-methyltetrahydropteroyltri-L-glutamate-binding positions include R17–K20 and K117. L-homocysteine-binding positions include I431–S433 and E484. L-methionine-binding positions include I431 to S433 and E484. 5-methyltetrahydropteroyltri-L-glutamate contacts are provided by residues R515–C516 and W561. D599 is a binding site for L-homocysteine. D599 is an L-methionine binding site. Residue E605 coordinates 5-methyltetrahydropteroyltri-L-glutamate. Residues H641, C643, and E665 each contribute to the Zn(2+) site. Residue H694 is the Proton donor of the active site. C726 serves as a coordination point for Zn(2+).

It belongs to the vitamin-B12 independent methionine synthase family. As to quaternary structure, monomer. It depends on Zn(2+) as a cofactor.

The enzyme catalyses 5-methyltetrahydropteroyltri-L-glutamate + L-homocysteine = tetrahydropteroyltri-L-glutamate + L-methionine. It functions in the pathway amino-acid biosynthesis; L-methionine biosynthesis via de novo pathway; L-methionine from L-homocysteine (MetE route): step 1/1. In terms of biological role, catalyzes the transfer of a methyl group from 5-methyltetrahydrofolate to homocysteine resulting in methionine formation. The chain is 5-methyltetrahydropteroyltriglutamate--homocysteine methyltransferase from Escherichia coli (strain K12).